The sequence spans 639 residues: UvrABC system protein C (639 aa).

A GIY-YIG domain is found at 20 to 97; that stretch reads ERSGVYRMFD…IKKFQPKFNI (78 aa). In terms of domain architecture, UVR spans 207-242; it reads KELQENLSRKMEELSSQMRFEEAAEIRDRIKALSYV.

The protein belongs to the UvrC family. In terms of assembly, interacts with UvrB in an incision complex.

It is found in the cytoplasm. Its function is as follows. The UvrABC repair system catalyzes the recognition and processing of DNA lesions. UvrC both incises the 5' and 3' sides of the lesion. The N-terminal half is responsible for the 3' incision and the C-terminal half is responsible for the 5' incision. This Rickettsia peacockii (strain Rustic) protein is UvrABC system protein C.